Reading from the N-terminus, the 239-residue chain is Enolase-phosphatase E1 (239 aa).

2 residues coordinate Mg(2+): Asp13 and Glu15. Residues 133-134 (SS) and Lys170 contribute to the substrate site. Asp196 contributes to the Mg(2+) binding site.

It belongs to the HAD-like hydrolase superfamily. MasA/MtnC family. As to quaternary structure, monomer. It depends on Mg(2+) as a cofactor.

The protein resides in the cytoplasm. The protein localises to the nucleus. The catalysed reaction is 5-methylsulfanyl-2,3-dioxopentyl phosphate + H2O = 1,2-dihydroxy-5-(methylsulfanyl)pent-1-en-3-one + phosphate. It functions in the pathway amino-acid biosynthesis; L-methionine biosynthesis via salvage pathway; L-methionine from S-methyl-5-thio-alpha-D-ribose 1-phosphate: step 3/6. Its pathway is amino-acid biosynthesis; L-methionine biosynthesis via salvage pathway; L-methionine from S-methyl-5-thio-alpha-D-ribose 1-phosphate: step 4/6. Its function is as follows. Bifunctional enzyme that catalyzes the enolization of 2,3-diketo-5-methylthiopentyl-1-phosphate (DK-MTP-1-P) into the intermediate 2-hydroxy-3-keto-5-methylthiopentenyl-1-phosphate (HK-MTPenyl-1-P), which is then dephosphorylated to form the acireductone 1,2-dihydroxy-3-keto-5-methylthiopentene (DHK-MTPene). This is Enolase-phosphatase E1 from Chaetomium globosum (strain ATCC 6205 / CBS 148.51 / DSM 1962 / NBRC 6347 / NRRL 1970) (Soil fungus).